The chain runs to 41 residues: MKIRNSLKSLRGRHRDNQLVRRKGRVYVINKTQKRFKARQG.

Belongs to the bacterial ribosomal protein bL36 family.

This Methylorubrum extorquens (strain CM4 / NCIMB 13688) (Methylobacterium extorquens) protein is Large ribosomal subunit protein bL36.